The following is a 251-amino-acid chain: Phosphate import ATP-binding protein PstB 2 (251 aa).

Positions 5–246 constitute an ABC transporter domain; sequence ITTKDVHLYY…PDKEQTADYL (242 aa). 37–44 is an ATP binding site; sequence GPSGCGKS.

This sequence belongs to the ABC transporter superfamily. Phosphate importer (TC 3.A.1.7) family. In terms of assembly, the complex is composed of two ATP-binding proteins (PstB), two transmembrane proteins (PstC and PstA) and a solute-binding protein (PstS).

It localises to the cell membrane. It catalyses the reaction phosphate(out) + ATP + H2O = ADP + 2 phosphate(in) + H(+). Part of the ABC transporter complex PstSACB involved in phosphate import. Responsible for energy coupling to the transport system. This is Phosphate import ATP-binding protein PstB 2 from Ligilactobacillus salivarius (strain UCC118) (Lactobacillus salivarius).